The sequence spans 586 residues: Membrane protein insertase YidC (586 aa).

A run of 5 helical transmembrane segments spans residues Thr-5–Pro-25, Gly-371–Ala-391, Leu-436–Phe-456, Ile-486–Phe-506, and Phe-522–Leu-542.

It belongs to the OXA1/ALB3/YidC family. Type 1 subfamily. In terms of assembly, interacts with the Sec translocase complex via SecD. Specifically interacts with transmembrane segments of nascent integral membrane proteins during membrane integration.

It is found in the cell inner membrane. Functionally, required for the insertion and/or proper folding and/or complex formation of integral membrane proteins into the membrane. Involved in integration of membrane proteins that insert both dependently and independently of the Sec translocase complex, as well as at least some lipoproteins. Aids folding of multispanning membrane proteins. This is Membrane protein insertase YidC from Chloroherpeton thalassium (strain ATCC 35110 / GB-78).